A 486-amino-acid chain; its full sequence is Malonate-semialdehyde dehydrogenase 1 (486 aa).

NAD(+) is bound by residues F154, K178, E181, R182, and S231. Residue C286 is the Nucleophile of the active site. Residue E386 coordinates NAD(+).

The protein belongs to the aldehyde dehydrogenase family. IolA subfamily. As to quaternary structure, homotetramer.

The catalysed reaction is 3-oxopropanoate + NAD(+) + CoA + H2O = hydrogencarbonate + acetyl-CoA + NADH + H(+). It carries out the reaction 2-methyl-3-oxopropanoate + NAD(+) + CoA + H2O = propanoyl-CoA + hydrogencarbonate + NADH + H(+). The protein operates within polyol metabolism; myo-inositol degradation into acetyl-CoA; acetyl-CoA from myo-inositol: step 7/7. Functionally, catalyzes the oxidation of malonate semialdehyde (MSA) and methylmalonate semialdehyde (MMSA) into acetyl-CoA and propanoyl-CoA, respectively. Is involved in a myo-inositol catabolic pathway. Bicarbonate, and not CO2, is the end-product of the enzymatic reaction. This is Malonate-semialdehyde dehydrogenase 1 from Oceanobacillus iheyensis (strain DSM 14371 / CIP 107618 / JCM 11309 / KCTC 3954 / HTE831).